A 329-amino-acid polypeptide reads, in one-letter code: MQEFEFAVPAPSRVSPDLARARARHLDWVHAMDLVRGEEARRRYEFSCVADIGAYGYPHATGADLDLCVDVLGWTFLFDDQFDAGDGRERDALAVCAELTDLLWKGTAATAASPPIVVAFSDCWERMRAGMSDAWRRRTVHEWVDYLAGWPTKLADRAHGAVLDPAAHLRARHRTICCRPLFALAERVGGYEVPRRAWHSSRLDGMRFTTSDAVIGMNELHSFEKDRAQGHANLVLSLVHHGGLTGPEAVTRVCDLVQGSIESFLRLRSGLPELGRALGVEGAVLDRYADALSAFCRGYHDWGRGASRYTTRDHPGDLGLENLVARSSG.

Asp79 contributes to the Mg(2+) binding site. Residues 79–83 (DDQFD) carry the DDXXD motif motif. Arg172 serves as a coordination point for substrate. 2 residues coordinate Mg(2+): Asn218 and Ser222. The NXXXSXXXD motif signature appears at 218–226 (NELHSFEKD). Residue Lys225 coordinates substrate. Residue Asp226 coordinates Mg(2+). Residue 308-309 (RY) coordinates substrate.

The protein belongs to the terpene synthase family. As to quaternary structure, homodimer. The cofactor is Mg(2+).

It carries out the reaction (2E)-geranyl diphosphate + H2O = (R)-linalool + diphosphate. The catalysed reaction is (2E,6E)-farnesyl diphosphate + H2O = (6E)-nerolidol + diphosphate. Functionally, in vitro, catalyzes the formation of R-linalool from geranyl diphosphate (GPP). Can also accept farnesyl diphosphate (FPP) as substrate to produce trans-nerolidol. This Streptomyces clavuligerus protein is R-linalool synthase.